Reading from the N-terminus, the 139-residue chain is Large-conductance mechanosensitive channel (139 aa).

3 helical membrane-spanning segments follow: residues 10 to 30 (FAVK…AAFG), 40 to 60 (VIMP…YYIA), and 80 to 100 (LAYG…FIIF).

The protein belongs to the MscL family. In terms of assembly, homopentamer.

It is found in the cell inner membrane. Its function is as follows. Channel that opens in response to stretch forces in the membrane lipid bilayer. May participate in the regulation of osmotic pressure changes within the cell. The polypeptide is Large-conductance mechanosensitive channel (Janthinobacterium sp. (strain Marseille) (Minibacterium massiliensis)).